The following is a 90-amino-acid chain: Small ribosomal subunit protein bS20 (90 aa).

The segment at 1–25 (MANSAQARKRARQAAKANSHNSALR) is disordered.

It belongs to the bacterial ribosomal protein bS20 family.

Binds directly to 16S ribosomal RNA. The sequence is that of Small ribosomal subunit protein bS20 from Burkholderia multivorans (strain ATCC 17616 / 249).